A 156-amino-acid polypeptide reads, in one-letter code: Small ribosomal subunit protein uS7 (156 aa).

Belongs to the universal ribosomal protein uS7 family. Part of the 30S ribosomal subunit. Contacts proteins S9 and S11.

In terms of biological role, one of the primary rRNA binding proteins, it binds directly to 16S rRNA where it nucleates assembly of the head domain of the 30S subunit. Is located at the subunit interface close to the decoding center, probably blocks exit of the E-site tRNA. This Aromatoleum aromaticum (strain DSM 19018 / LMG 30748 / EbN1) (Azoarcus sp. (strain EbN1)) protein is Small ribosomal subunit protein uS7.